A 132-amino-acid polypeptide reads, in one-letter code: Small ribosomal subunit protein bS6 (132 aa).

It belongs to the bacterial ribosomal protein bS6 family.

In terms of biological role, binds together with bS18 to 16S ribosomal RNA. The polypeptide is Small ribosomal subunit protein bS6 (Chlorobium chlorochromatii (strain CaD3)).